Here is a 52-residue protein sequence, read N- to C-terminus: Large ribosomal subunit protein eL39 (52 aa).

The protein belongs to the eukaryotic ribosomal protein eL39 family.

The sequence is that of Large ribosomal subunit protein eL39 from Desulfurococcus amylolyticus (strain DSM 18924 / JCM 16383 / VKM B-2413 / 1221n) (Desulfurococcus kamchatkensis).